We begin with the raw amino-acid sequence, 114 residues long: MALGWYELKLAKDGQFMFNLKAANSQVILTSELYRSRSAAENGIASVQKNGLDEKNFEVRVAKNDKPYFVLKAKNHQEIGRSQYYSSSVSAKKGIVSVTKNAASTVIKDLTNEA.

A run of 2 repeats spans residues 11 to 59 and 62 to 110.

This sequence belongs to the UPF0339 family. Duplicated subfamily.

The sequence is that of UPF0339 protein PM0519 from Pasteurella multocida (strain Pm70).